The sequence spans 149 residues: Regulatory protein YlbF (149 aa).

Its subcellular location is the cytoplasm. Functionally, regulates sporulation prior to stage II. Positively controls the competence regulator ComK at a post-transcriptional level. May modulate the translation, stability or activity of ComS. May work together with YmcA to regulate community development. The sequence is that of Regulatory protein YlbF (ylbF) from Bacillus subtilis (strain 168).